The following is a 299-amino-acid chain: GDNF family receptor alpha-4 (299 aa).

Positions 1 to 20 are cleaved as a signal peptide; it reads MVRCLGPALLLLLLLGSASS. The tract at residues 145–198 is disordered; it reads RGLSPAHRPPAAQASPPGLSGLVHPSAQRPRRLPAGPGRPLPARLRGPRGVPAG. Residues 177-198 show a composition bias toward low complexity; that stretch reads LPAGPGRPLPARLRGPRGVPAG. Asn-208 carries an N-linked (GlcNAc...) asparagine glycan. Gly-278 is lipidated: GPI-anchor amidated glycine. A propeptide spans 279–299 (removed in mature form); the sequence is RALERRSLLSILPVLALPALL.

Belongs to the GDNFR family. As to quaternary structure, interacts with ARTN ligand and RET: forms a 2:2:2 ternary complex composed of ARTN ligand, GFRA3 and RET receptor. Interacts with SORL1. As to expression, predominantly expressed in the adult thyroid gland. Low levels also found in fetal adrenal and thyroid glands.

Its subcellular location is the cell membrane. The protein resides in the secreted. Receptor for persephin (PSPN), a growth factor that exhibits neurotrophic activity on mesencephalic dopaminergic and motor neurons. Acts by binding to its coreceptor, GFRA4, leading to autophosphorylation and activation of the RET receptor. May be important in C-cell development and, in the postnatal development of the adrenal medulla. This Homo sapiens (Human) protein is GDNF family receptor alpha-4 (GFRA4).